The chain runs to 117 residues: uncharacterized protein (117 aa).

The signal sequence occupies residues 1–24; it reads MMTEFGSAMTLVTGLVAYGAYVKS. Residues 42–117 form a disordered region; sequence EKENFNYNNN…NNQIKRRLFD (76 aa). Low complexity predominate over residues 46–95; sequence FNYNNNNNNNNNNNNNNSNNNDNNNNNNSNSNNNNNNNNNNNNNNNNNIN. N-linked (GlcNAc...) asparagine glycans are attached at residues Asn61 and Asn72. The segment covering 96 to 110 has biased composition (polar residues); sequence DKQINGTNIFDSNNQ.

The protein resides in the secreted. This is an uncharacterized protein from Dictyostelium discoideum (Social amoeba).